Consider the following 381-residue polypeptide: Phthiodiolone/phenolphthiodiolone dimycocerosates ketoreductase (381 aa).

This sequence belongs to the mer family. Phthiodiolone/phenolphthiodiolone dimycocerosates ketoreductase subfamily.

Catalyzes the reduction of the keto moiety of phthiodiolone dimycocerosates (DIM B) and glycosylated phenolphthiodiolone dimycocerosates to form the intermediate compounds phthiotriol and glycosylated phenolphthiotriol dimycocerosates during phthiocerol dimycocerosates (DIM A) and glycosylated phenolphthiocerol dimycocerosates (PGL) biosynthesis. The chain is Phthiodiolone/phenolphthiodiolone dimycocerosates ketoreductase from Mycobacterium bovis (strain ATCC BAA-935 / AF2122/97).